Reading from the N-terminus, the 86-residue chain is Large ribosomal subunit protein bL27c (86 aa).

Positions 1-27 are disordered; sequence MAHKKGSGSTRNGRDSNSKRLGVKKYG.

The protein belongs to the bacterial ribosomal protein bL27 family.

The protein resides in the plastid. It is found in the chloroplast. This is Large ribosomal subunit protein bL27c (rpl27) from Porphyra purpurea (Red seaweed).